The sequence spans 77 residues: U8-lycotoxin-Ls1l (77 aa).

Residues 1–20 (MKLMIFTGLVLFAIVSLIEA) form the signal peptide. A propeptide spanning residues 21-26 (QAENEK) is cleaved from the precursor.

This sequence belongs to the neurotoxin 19 (CSTX) family. 08 (U8-Lctx) subfamily. Contains 4 disulfide bonds. Expressed by the venom gland.

It is found in the secreted. This Lycosa singoriensis (Wolf spider) protein is U8-lycotoxin-Ls1l.